A 342-amino-acid polypeptide reads, in one-letter code: Phosphoribosylformylglycinamidine cyclo-ligase (342 aa).

The protein belongs to the AIR synthase family.

Its subcellular location is the cytoplasm. It carries out the reaction 2-formamido-N(1)-(5-O-phospho-beta-D-ribosyl)acetamidine + ATP = 5-amino-1-(5-phospho-beta-D-ribosyl)imidazole + ADP + phosphate + H(+). Its pathway is purine metabolism; IMP biosynthesis via de novo pathway; 5-amino-1-(5-phospho-D-ribosyl)imidazole from N(2)-formyl-N(1)-(5-phospho-D-ribosyl)glycinamide: step 2/2. This Staphylococcus aureus (strain Mu3 / ATCC 700698) protein is Phosphoribosylformylglycinamidine cyclo-ligase.